The primary structure comprises 240 residues: 2,3,4,5-tetrahydropyridine-2,6-dicarboxylate N-acetyltransferase (240 aa).

It belongs to the transferase hexapeptide repeat family. DapH subfamily.

It catalyses the reaction (S)-2,3,4,5-tetrahydrodipicolinate + acetyl-CoA + H2O = L-2-acetamido-6-oxoheptanedioate + CoA. The protein operates within amino-acid biosynthesis; L-lysine biosynthesis via DAP pathway; LL-2,6-diaminopimelate from (S)-tetrahydrodipicolinate (acetylase route): step 1/3. Catalyzes the transfer of an acetyl group from acetyl-CoA to tetrahydrodipicolinate. This chain is 2,3,4,5-tetrahydropyridine-2,6-dicarboxylate N-acetyltransferase, found in Bacillus thuringiensis (strain Al Hakam).